The sequence spans 357 residues: Serine proteinase inhibitor 1 (357 aa).

This sequence belongs to the serpin family. Poxviruses subfamily.

Its subcellular location is the host cytoplasm. This viral protein may be involved in the regulation of the complement cascade. Involved in red pock formation. The polypeptide is Serine proteinase inhibitor 1 (SPI-1) (Oryctolagus cuniculus (Rabbit)).